Here is a 256-residue protein sequence, read N- to C-terminus: UPF0246 protein Sde_3824 (256 aa).

This sequence belongs to the UPF0246 family.

This chain is UPF0246 protein Sde_3824, found in Saccharophagus degradans (strain 2-40 / ATCC 43961 / DSM 17024).